A 622-amino-acid polypeptide reads, in one-letter code: MHPEVSEQQADGATEPSLEESAGDHSGAGPGVRKEEINETKETCVGPSTTSCQSQKQQSGDSRLECRSGYARNDRDDRGPRMTKEFLQKLCKQHKLYITPALNDTLYLHFKGFDRIENLEEYTGLRCLWLECNGIQRIENLQAQSELRCLFLQVNLLHKIENLEPLQKLDALNLSNNYIKTIENLSCLPVLNTLQMAHNRLETVADIQHLGECLRLCVLDLSHNMLSDPEILSVLESMPCLRVLNLMGNPVTKHIPNYRRTVTVRLKQLTYLDDRPVFPKDRACAEAWARGGYAAEKEERLQWESREHKKITDSLEALAMIKRRAEERKKARDKGETPLPDSEESSSTSPEAQEKPPLGETQEKIELFVKGSFKAKDELFPEKPGGEEELAVVADRTVEEPDLSGSLAQSQIPLVATAEESTSSVAATDGARTEDTEAIALETKERLFIDDLPDLEDVDGMDISIEDQTKETGIPKIQVVSSLSDDSDPELNDSSLPMLEHTPTGSTGILSNIFAVCKDSSKAARVPLTDICKPTATTEVETQGQVFSTTRPQPLIQELGEDGRGENEPNQSLPAQSSEDGDSQLPEATPLGDRAENEAQSSLDLGEPSPRASLEDIEFGLD.

Residues 1–11 (MHPEVSEQQAD) are compositionally biased toward polar residues. Residues 1 to 80 (MHPEVSEQQA…ARNDRDDRGP (80 aa)) form a disordered region. Basic and acidic residues predominate over residues 32–42 (VRKEEINETKE). Over residues 48–59 (STTSCQSQKQQS) the composition is skewed to low complexity. The span at 62-80 (SRLECRSGYARNDRDDRGP) shows a compositional bias: basic and acidic residues. LRR repeat units follow at residues 101–123 (ALNDTLYLHFKGFDRIENLEEYT), 124–145 (GLRCLWLECNGIQRIENLQAQS), 146–167 (ELRCLFLQVNLLHKIENLEPLQ), 168–189 (KLDALNLSNNYIKTIENLSCLP), 190–211 (VLNTLQMAHNRLETVADIQHLG), and 215–236 (RLCVLDLSHNMLSDPEILSVLE). The LRRCT domain maps to 249–288 (NPVTKHIPNYRRTVTVRLKQLTYLDDRPVFPKDRACAEAW). A compositionally biased stretch (basic and acidic residues) spans 326-336 (EERKKARDKGE). A disordered region spans residues 326 to 363 (EERKKARDKGETPLPDSEESSSTSPEAQEKPPLGETQE). Positions 337-351 (TPLPDSEESSSTSPE) are enriched in low complexity. Phosphoserine is present on residues Ser-349, Ser-464, and Ser-487. Disordered regions lie at residues 481–505 (SSLSDDSDPELNDSSLPMLEHTPTG) and 535–622 (TATT…FGLD). Composition is skewed to polar residues over residues 535–552 (TATTEVETQGQVFSTTRP) and 568–578 (EPNQSLPAQSS).

It belongs to the DNAAF1 family.

It is found in the cell projection. Its subcellular location is the cilium. Cilium-specific protein required for the stability of the ciliary architecture. Plays a role in cytoplasmic preassembly of dynein arms. Involved in regulation of microtubule-based cilia and actin-based brush border microvilli. This chain is Dynein axonemal assembly factor 1 (Dnaaf1), found in Peromyscus californicus (California mouse).